A 156-amino-acid polypeptide reads, in one-letter code: ATP synthase subunit b (156 aa).

The chain crosses the membrane as a helical span at residues 7–29 (LIGQLIAFALFTWFCVKFVWPPI).

Belongs to the ATPase B chain family. As to quaternary structure, F-type ATPases have 2 components, F(1) - the catalytic core - and F(0) - the membrane proton channel. F(1) has five subunits: alpha(3), beta(3), gamma(1), delta(1), epsilon(1). F(0) has three main subunits: a(1), b(2) and c(10-14). The alpha and beta chains form an alternating ring which encloses part of the gamma chain. F(1) is attached to F(0) by a central stalk formed by the gamma and epsilon chains, while a peripheral stalk is formed by the delta and b chains.

It localises to the cell inner membrane. In terms of biological role, f(1)F(0) ATP synthase produces ATP from ADP in the presence of a proton or sodium gradient. F-type ATPases consist of two structural domains, F(1) containing the extramembraneous catalytic core and F(0) containing the membrane proton channel, linked together by a central stalk and a peripheral stalk. During catalysis, ATP synthesis in the catalytic domain of F(1) is coupled via a rotary mechanism of the central stalk subunits to proton translocation. Functionally, component of the F(0) channel, it forms part of the peripheral stalk, linking F(1) to F(0). This is ATP synthase subunit b from Actinobacillus succinogenes (strain ATCC 55618 / DSM 22257 / CCUG 43843 / 130Z).